The following is a 295-amino-acid chain: MEEFDSEDFSTSDEDEDYLPSGGEYSEDDVNELVKEDEVDGEEQAEKTKGKRRKAQGIPARKRKQSGLLLEEEEDGKEDSGGSSSEEDEEEQEGGLGSENARKKKEDELWASFLNDVGPKSKAAPGSQTKVAEETEEISSNKPLVKADELDKPRESEKVKITKVFDFAGEEVRVTKEVDAASKEAKSFLKQTEREKPQALVTSPATPLPAGSGIKRASGMSSLLGKIGAKKQKMSTLEKSKLDWESFKEEEGIGEELAIHNRGKEGYIERKAFLDRVDHRQFEIERDLRLSKMKP.

Acidic residues-rich tracts occupy residues 1-18 (MEEF…DEDY) and 25-43 (YSED…DGEE). Disordered stretches follow at residues 1 to 153 (MEEF…LDKP) and 188 to 217 (FLKQ…IKRA). The segment covering 49–65 (KGKRRKAQGIPARKRKQ) has biased composition (basic residues). Residues Ser-80, Ser-83, Ser-84, and Ser-112 each carry the phosphoserine modification. Residue Lys-146 forms a Glycyl lysine isopeptide (Lys-Gly) (interchain with G-Cter in SUMO2) linkage. A hydrophilic region spans residues 174–213 (VTKEVDAASKEAKSFLKQTEREKPQALVTSPATPLPAGSG). The span at 188-197 (FLKQTEREKP) shows a compositional bias: basic and acidic residues. Ser-212 carries the phosphoserine modification. Positions 214 to 295 (IKRASGMSSL…RDLRLSKMKP (82 aa)) constitute a BCNT-C domain. Lys-215 carries the post-translational modification N6-methyllysine. Ser-246 is subject to Phosphoserine.

Expressed in lung, liver and heart, with higher expression in teeth.

The protein localises to the chromosome. It localises to the centromere. The protein resides in the kinetochore. Functionally, may play a role during embryogenesis. May modulate tooth organogenesis since alterations of this protein function affect tooth organs size as well as individual cell fate and survival. In embryonic cells, blockage of the function results in increased number of apoptotic cells, reduced proliferation, alterations in cell shape and fibronection matrix synthesis. This Mus musculus (Mouse) protein is Craniofacial development protein 1 (Cfdp1).